Here is a 213-residue protein sequence, read N- to C-terminus: Serine acetyltransferase (213 aa).

Belongs to the transferase hexapeptide repeat family.

The protein resides in the cytoplasm. The catalysed reaction is L-serine + acetyl-CoA = O-acetyl-L-serine + CoA. It functions in the pathway amino-acid biosynthesis; L-cysteine biosynthesis; L-cysteine from L-serine: step 1/2. The protein is Serine acetyltransferase (cysE) of Staphylococcus epidermidis (strain ATCC 35984 / DSM 28319 / BCRC 17069 / CCUG 31568 / BM 3577 / RP62A).